The primary structure comprises 330 residues: Probable integrase/recombinase protein MJ0367 (330 aa).

The Core-binding (CB) domain maps to 22 to 112 (IEETDKIKEY…LLKVFYRVLR (91 aa)). One can recognise a Tyr recombinase domain in the interval 136 to 325 (QHYDAVDAEM…RAESLEFIKK (190 aa)). Residues Arg-177, Lys-202, His-275, Arg-278, and His-301 contribute to the active site. The active-site O-(3'-phospho-DNA)-tyrosine intermediate is Tyr-310.

This sequence belongs to the 'phage' integrase family.

The protein is Probable integrase/recombinase protein MJ0367 of Methanocaldococcus jannaschii (strain ATCC 43067 / DSM 2661 / JAL-1 / JCM 10045 / NBRC 100440) (Methanococcus jannaschii).